Reading from the N-terminus, the 243-residue chain is Peptidyl-tRNA hydrolase (243 aa).

Y14 lines the tRNA pocket. H19 (proton acceptor) is an active-site residue. 3 residues coordinate tRNA: Y64, N66, and N112. Basic and acidic residues predominate over residues 190-207 (KAEEEKPRKEGKDGEKKP). The segment at 190–243 (KAEEEKPRKEGKDGEKKPAGQSHIRQARSSNQPKLPATGPMAEMLKKMFGNKGE) is disordered. Positions 212–222 (HIRQARSSNQP) are enriched in polar residues.

Belongs to the PTH family. Monomer.

It localises to the cytoplasm. The enzyme catalyses an N-acyl-L-alpha-aminoacyl-tRNA + H2O = an N-acyl-L-amino acid + a tRNA + H(+). In terms of biological role, hydrolyzes ribosome-free peptidyl-tRNAs (with 1 or more amino acids incorporated), which drop off the ribosome during protein synthesis, or as a result of ribosome stalling. Catalyzes the release of premature peptidyl moieties from peptidyl-tRNA molecules trapped in stalled 50S ribosomal subunits, and thus maintains levels of free tRNAs and 50S ribosomes. This Rhizobium etli (strain CIAT 652) protein is Peptidyl-tRNA hydrolase.